The following is a 386-amino-acid chain: Cytochrome b (386 aa).

The next 4 helical transmembrane spans lie at 32 to 52 (FGSLLALCLGIQIVTGVTLAM), 76 to 98 (WMIRYLHANTASFFFLFVYLHIG), 113 to 133 (PWSIGVIILILMMATAFLGYV), and 179 to 199 (FFSLHYLLPFILAALAVMHLL). Positions 82 and 96 each coordinate heme b. Heme b-binding residues include His-183 and His-197. An a ubiquinone-binding site is contributed by His-202. 4 consecutive transmembrane segments (helical) span residues 225–245 (YTFKDLVTIFLFFLVLALFLF), 289–309 (LGGVIAMFGSLLILLAMPLLD), 321–341 (LMKFFFWLLVVDFLILLWCGS), and 348–368 (FITLGQFATTFYFSWFLIIVP).

Belongs to the cytochrome b family. As to quaternary structure, fungal cytochrome b-c1 complex contains 10 subunits; 3 respiratory subunits, 2 core proteins and 5 low-molecular weight proteins. Cytochrome b-c1 complex is a homodimer. The cofactor is heme b.

It localises to the mitochondrion inner membrane. Its function is as follows. Component of the ubiquinol-cytochrome c reductase complex (complex III or cytochrome b-c1 complex) that is part of the mitochondrial respiratory chain. The b-c1 complex mediates electron transfer from ubiquinol to cytochrome c. Contributes to the generation of a proton gradient across the mitochondrial membrane that is then used for ATP synthesis. This chain is Cytochrome b (cob), found in Rhizopus oryzae (Mucormycosis agent).